The chain runs to 95 residues: DNA-directed RNA polymerase subunit Rpo6 (95 aa).

The protein belongs to the archaeal Rpo6/eukaryotic RPB6 RNA polymerase subunit family. In terms of assembly, part of the 13-subunit RNA polymerase complex.

It is found in the cytoplasm. The catalysed reaction is RNA(n) + a ribonucleoside 5'-triphosphate = RNA(n+1) + diphosphate. In terms of biological role, DNA-dependent RNA polymerase (RNAP) catalyzes the transcription of DNA into RNA using the four ribonucleoside triphosphates as substrates. The sequence is that of DNA-directed RNA polymerase subunit Rpo6 from Saccharolobus solfataricus (strain ATCC 35092 / DSM 1617 / JCM 11322 / P2) (Sulfolobus solfataricus).